A 71-amino-acid chain; its full sequence is Translation initiation factor IF-1 (71 aa).

The region spanning 1 to 71 (MSKDDLIQFT…LTKGRVIHRH (71 aa)) is the S1-like domain.

Belongs to the IF-1 family. As to quaternary structure, component of the 30S ribosomal translation pre-initiation complex which assembles on the 30S ribosome in the order IF-2 and IF-3, IF-1 and N-formylmethionyl-tRNA(fMet); mRNA recruitment can occur at any time during PIC assembly.

Its subcellular location is the cytoplasm. Its function is as follows. One of the essential components for the initiation of protein synthesis. Stabilizes the binding of IF-2 and IF-3 on the 30S subunit to which N-formylmethionyl-tRNA(fMet) subsequently binds. Helps modulate mRNA selection, yielding the 30S pre-initiation complex (PIC). Upon addition of the 50S ribosomal subunit IF-1, IF-2 and IF-3 are released leaving the mature 70S translation initiation complex. The sequence is that of Translation initiation factor IF-1 from Rickettsia felis (strain ATCC VR-1525 / URRWXCal2) (Rickettsia azadi).